Here is a 38-residue protein sequence, read N- to C-terminus: Photosystem II reaction center protein L (38 aa).

A helical transmembrane segment spans residues 17–37 (SLYWGLLLIFVLAVLFSSYIF).

Belongs to the PsbL family. PSII is composed of 1 copy each of membrane proteins PsbA, PsbB, PsbC, PsbD, PsbE, PsbF, PsbH, PsbI, PsbJ, PsbK, PsbL, PsbM, PsbT, PsbX, PsbY, PsbZ, Psb30/Ycf12, at least 3 peripheral proteins of the oxygen-evolving complex and a large number of cofactors. It forms dimeric complexes.

It is found in the plastid. The protein localises to the chloroplast thylakoid membrane. Its function is as follows. One of the components of the core complex of photosystem II (PSII). PSII is a light-driven water:plastoquinone oxidoreductase that uses light energy to abstract electrons from H(2)O, generating O(2) and a proton gradient subsequently used for ATP formation. It consists of a core antenna complex that captures photons, and an electron transfer chain that converts photonic excitation into a charge separation. This subunit is found at the monomer-monomer interface and is required for correct PSII assembly and/or dimerization. The chain is Photosystem II reaction center protein L from Ostreococcus tauri.